The following is a 328-amino-acid chain: Arabinose 5-phosphate isomerase KdsD (328 aa).

An SIS domain is found at 41 to 184 (ACEKMFNCTG…AVALLKARGF (144 aa)). Substrate-binding positions include 75-76 (GT), His82, His88, 114-123 (ALIPVLKRLH), and 148-150 (KVP). Position 82 (His82) interacts with Zn(2+). A CBS 1 domain is found at 210–268 (MHTGDEIPHVNKHATLRDALLEITRKNLGMTVICDESMKIDGIFTDGDLRRMFDMGGDM). A substrate-binding site is contributed by Glu275. The CBS 2 domain maps to 277-328 (MTPGGIRVRPGILAVDALNLMQSRHITSVLVADGDQLLGVLHMHDLLRAGVV).

This sequence belongs to the SIS family. GutQ/KpsF subfamily. In terms of assembly, homotetramer.

The enzyme catalyses D-arabinose 5-phosphate = D-ribulose 5-phosphate. It functions in the pathway carbohydrate biosynthesis; 3-deoxy-D-manno-octulosonate biosynthesis; 3-deoxy-D-manno-octulosonate from D-ribulose 5-phosphate: step 1/3. It participates in bacterial outer membrane biogenesis; lipopolysaccharide biosynthesis. In terms of biological role, involved in the biosynthesis of 3-deoxy-D-manno-octulosonate (KDO), a unique 8-carbon sugar component of lipopolysaccharides (LPSs). Catalyzes the reversible aldol-ketol isomerization between D-ribulose 5-phosphate (Ru5P) and D-arabinose 5-phosphate (A5P). In Salmonella typhi, this protein is Arabinose 5-phosphate isomerase KdsD (kdsD).